The primary structure comprises 377 residues: Succinyl-diaminopimelate desuccinylase (377 aa).

A Zn(2+)-binding site is contributed by H68. D70 is a catalytic residue. D101 serves as a coordination point for Zn(2+). The Proton acceptor role is filled by E135. Zn(2+)-binding residues include E136, E164, and H350.

It belongs to the peptidase M20A family. DapE subfamily. Homodimer. It depends on Zn(2+) as a cofactor. Requires Co(2+) as cofactor.

The enzyme catalyses N-succinyl-(2S,6S)-2,6-diaminopimelate + H2O = (2S,6S)-2,6-diaminopimelate + succinate. The protein operates within amino-acid biosynthesis; L-lysine biosynthesis via DAP pathway; LL-2,6-diaminopimelate from (S)-tetrahydrodipicolinate (succinylase route): step 3/3. Its function is as follows. Catalyzes the hydrolysis of N-succinyl-L,L-diaminopimelic acid (SDAP), forming succinate and LL-2,6-diaminopimelate (DAP), an intermediate involved in the bacterial biosynthesis of lysine and meso-diaminopimelic acid, an essential component of bacterial cell walls. The chain is Succinyl-diaminopimelate desuccinylase from Aliivibrio salmonicida (strain LFI1238) (Vibrio salmonicida (strain LFI1238)).